The primary structure comprises 461 residues: ATP synthase subunit beta (461 aa).

151–158 (GGAGVGKT) lines the ATP pocket.

The protein belongs to the ATPase alpha/beta chains family. F-type ATPases have 2 components, CF(1) - the catalytic core - and CF(0) - the membrane proton channel. CF(1) has five subunits: alpha(3), beta(3), gamma(1), delta(1), epsilon(1). CF(0) has three main subunits: a(1), b(2) and c(9-12). The alpha and beta chains form an alternating ring which encloses part of the gamma chain. CF(1) is attached to CF(0) by a central stalk formed by the gamma and epsilon chains, while a peripheral stalk is formed by the delta and b chains.

The protein localises to the cell inner membrane. The enzyme catalyses ATP + H2O + 4 H(+)(in) = ADP + phosphate + 5 H(+)(out). Functionally, produces ATP from ADP in the presence of a proton gradient across the membrane. The catalytic sites are hosted primarily by the beta subunits. This Alteromonas mediterranea (strain DSM 17117 / CIP 110805 / LMG 28347 / Deep ecotype) protein is ATP synthase subunit beta.